Here is a 602-residue protein sequence, read N- to C-terminus: T-box transcription factor TBX15 (602 aa).

The segment at A46 to R84 is disordered. The span at E71 to R84 shows a compositional bias: polar residues. The T-box DNA-binding region spans L122–D304. At T330 the chain carries Phosphothreonine. Disordered regions lie at residues Q338 to S369 and Q425 to I447. Residues G346–S369 show a composition bias toward low complexity. The segment covering Q425 to L446 has biased composition (polar residues).

In terms of assembly, can form a heterodimer with TBX18.

The protein resides in the nucleus. Functionally, probable transcriptional regulator involved in the development of the skeleton of the limb, vertebral column and head. Acts by controlling the number of mesenchymal precursor cells and chondrocytes. The polypeptide is T-box transcription factor TBX15 (TBX15) (Homo sapiens (Human)).